Here is a 133-residue protein sequence, read N- to C-terminus: Small ribosomal subunit protein uS8 (133 aa).

The protein belongs to the universal ribosomal protein uS8 family. In terms of assembly, part of the 30S ribosomal subunit. Contacts proteins S5 and S12.

One of the primary rRNA binding proteins, it binds directly to 16S rRNA central domain where it helps coordinate assembly of the platform of the 30S subunit. The protein is Small ribosomal subunit protein uS8 of Oenococcus oeni (strain ATCC BAA-331 / PSU-1).